We begin with the raw amino-acid sequence, 328 residues long: tRNA U34 carboxymethyltransferase (328 aa).

Residues Lys91, Trp105, Lys110, Gly130, 181–182, Met196, Tyr200, and Arg315 contribute to the carboxy-S-adenosyl-L-methionine site; that span reads IE.

The protein belongs to the class I-like SAM-binding methyltransferase superfamily. CmoB family. In terms of assembly, homotetramer.

It carries out the reaction carboxy-S-adenosyl-L-methionine + 5-hydroxyuridine(34) in tRNA = 5-carboxymethoxyuridine(34) in tRNA + S-adenosyl-L-homocysteine + H(+). In terms of biological role, catalyzes carboxymethyl transfer from carboxy-S-adenosyl-L-methionine (Cx-SAM) to 5-hydroxyuridine (ho5U) to form 5-carboxymethoxyuridine (cmo5U) at position 34 in tRNAs. The polypeptide is tRNA U34 carboxymethyltransferase (Pectobacterium carotovorum subsp. carotovorum (strain PC1)).